The primary structure comprises 65 residues: Ferredoxin-1 (65 aa).

Residues 2–30 (AMKIDPELCTSCGDCEPVCPTNAIAPKKG) form the 4Fe-4S ferredoxin-type domain. 8 residues coordinate [4Fe-4S] cluster: Cys10, Cys13, Cys16, Cys20, Cys39, Cys42, Cys51, and Cys55.

[4Fe-4S] cluster serves as cofactor.

In terms of biological role, ferredoxins are iron-sulfur proteins that transfer electrons in a wide variety of metabolic reactions. This ferredoxin probably participates in nitrogen fixation. The polypeptide is Ferredoxin-1 (fdxN) (Rhodobacter capsulatus (Rhodopseudomonas capsulata)).